We begin with the raw amino-acid sequence, 192 residues long: Zinc finger CCHC domain-containing protein 10 (192 aa).

The CCHC-type zinc-finger motif lies at 43–60; that stretch reads VRCQKCLEFGHWTYECTG. The disordered stretch occupies residues 89–192; it reads QSIGETNVER…DEPPKKKKKK (104 aa). Low complexity-rich tracts occupy residues 109-136 and 144-179; these read TSSSSSSSDSSASDSSSESEETSTSSSS and SSSSSSSSASSTTSSSSSDSDSDSSSSSSSSTSTDS.

This is Zinc finger CCHC domain-containing protein 10 (ZCCHC10) from Homo sapiens (Human).